The chain runs to 204 residues: Somatotropin (204 aa).

A signal peptide spans 1–17; sequence MDKVLFLLFVLSLGVSS. Glutamine 18 is subject to Pyrrolidone carboxylic acid. Residue histidine 36 participates in Zn(2+) binding. A disulfide bond links cysteine 69 and cysteine 177. Glutamate 186 contacts Zn(2+). A disulfide bond links cysteine 194 and cysteine 202.

The protein belongs to the somatotropin/prolactin family.

The protein resides in the secreted. Functionally, growth hormone plays an important role in growth control and is involved in the regulation of several anabolic processes. Implicated as an osmoregulatory substance important for seawater adaptation. The sequence is that of Somatotropin (gh) from Trichopodus trichopterus (Three spot gourami).